Reading from the N-terminus, the 146-residue chain is Gonadotropin subunit beta-2 (146 aa).

Residues 1–28 form the signal peptide; it reads TGTPVKILVVRNILLLLFCLVVLLVFAQ. 6 disulfide bridges follow: Cys-35–Cys-83, Cys-49–Cys-98, Cys-52–Cys-136, Cys-60–Cys-114, Cys-64–Cys-116, and Cys-119–Cys-126. N-linked (GlcNAc...) asparagine glycosylation is present at Asn-39.

The protein belongs to the glycoprotein hormones subunit beta family. As to quaternary structure, heterodimer of an alpha and a beta chain.

Its subcellular location is the secreted. Its function is as follows. Involved in gametogenesis and steroidogenesis. This chain is Gonadotropin subunit beta-2 (cgbb), found in Ctenopharyngodon idella (Grass carp).